A 79-amino-acid polypeptide reads, in one-letter code: RNA-binding protein KhpA (79 aa).

Residues 32 to 79 (TVVIELRVDPAELGKVIGKQGRIARALRTILTAIGRKIGKRVVLEILE) form the KH domain.

This sequence belongs to the KhpA RNA-binding protein family.

It localises to the cytoplasm. Functionally, a probable RNA-binding protein. This is RNA-binding protein KhpA from Aquifex aeolicus (strain VF5).